The sequence spans 167 residues: Interferon gamma (167 aa).

An N-terminal signal peptide occupies residues 1-23; sequence MSYTSYILAFQLCLILGSYGCYC. Pyrrolidone carboxylic acid is present on Gln-24. Residues Asn-41, Asn-108, and Asn-117 are each glycosylated (N-linked (GlcNAc...) asparagine).

This sequence belongs to the type II (or gamma) interferon family. In terms of assembly, homodimer. Interacts with IFNGR1 (via extracellular domain); this interaction promotes IFNGR1 dimerization. Released primarily from activated T lymphocytes.

The protein localises to the secreted. Type II interferon produced by immune cells such as T-cells and NK cells that plays crucial roles in antimicrobial, antiviral, and antitumor responses by activating effector immune cells and enhancing antigen presentation. Primarily signals through the JAK-STAT pathway after interaction with its receptor IFNGR1 to affect gene regulation. Upon IFNG binding, IFNGR1 intracellular domain opens out to allow association of downstream signaling components JAK2, JAK1 and STAT1, leading to STAT1 activation, nuclear translocation and transcription of IFNG-regulated genes. Many of the induced genes are transcription factors such as IRF1 that are able to further drive regulation of a next wave of transcription. Plays a role in class I antigen presentation pathway by inducing a replacement of catalytic proteasome subunits with immunoproteasome subunits. In turn, increases the quantity, quality, and repertoire of peptides for class I MHC loading. Increases the efficiency of peptide generation also by inducing the expression of activator PA28 that associates with the proteasome and alters its proteolytic cleavage preference. Up-regulates as well MHC II complexes on the cell surface by promoting expression of several key molecules such as cathepsins B/CTSB, H/CTSH, and L/CTSL. Participates in the regulation of hematopoietic stem cells during development and under homeostatic conditions by affecting their development, quiescence, and differentiation. The sequence is that of Interferon gamma (IFNG) from Oryctolagus cuniculus (Rabbit).